The sequence spans 60 residues: UPF0434 protein SG0997 (60 aa).

The protein belongs to the UPF0434 family.

The chain is UPF0434 protein SG0997 from Sodalis glossinidius (strain morsitans).